A 402-amino-acid polypeptide reads, in one-letter code: MMQQVKRAFKYRFYPTDEQAAELSRTFGCVRLVYNKALEGRTRAWYGEQRRVSYVQSSAALTEWKKTEELAFLSEVSSVPLQQALRHLQTAFANFFAKRSKYPRYKSRKKSRASAEYTRSAFTWRNGQLTLAKTAEPLDIRWSRPLPEGAEPTTVTVSRDRAGRWFVSLLCEDTITPAPATTAAVGIDAGITSLVTLSTGEKITNPKHERRDRARLAKAQRDVSRKAKGSANRKKARRKVARVHARITDRRCDFLHKLSTRLVRENQTVVIEDLTVRNLLKNGKLARAISDAAWTELRSMLEYKCAWYGRELVVIDRWFPSSKLCGTCGTVRGKLPLNVREWTCDCGAVHDRDVNAARNILAAGLAASACGDGIRPQRESSRTGRSSVKQEPQRATAGIPRL.

Asp188 is a catalytic residue. The tract at residues 202–239 is disordered; that stretch reads KITNPKHERRDRARLAKAQRDVSRKAKGSANRKKARRK. Residues 204–225 are compositionally biased toward basic and acidic residues; it reads TNPKHERRDRARLAKAQRDVSR. The span at 226–239 shows a compositional bias: basic residues; sequence KAKGSANRKKARRK. Residue Glu272 is part of the active site. Zn(2+)-binding residues include Cys325, Cys328, Cys344, and Cys346. Residue Asp353 is part of the active site. Residues 373 to 402 form a disordered region; that stretch reads GIRPQRESSRTGRSSVKQEPQRATAGIPRL.

It in the N-terminal section; belongs to the transposase 2 family. The protein in the C-terminal section; belongs to the transposase 35 family.

In terms of biological role, an RNA-guided dsDNA endonuclease. When guided by an RNA derived from the right-end element of its insertion sequence element (IS), cleaves DNA downstream of the transposon-associated motif (TAM). Cleaves supercoiled and linear DNA in a staggered manner 15-21 bases from the TAM yielding 5'-overhangs. Binds reRNA, an approximately 150 nucleotide base sRNA derived from the 3' end of its own gene, the right end (RE) of the insertion sequence (IS) plus sequence downstream of the IS. The protein is Putative RNA-guided DNA endonuclease of Streptomyces pristinaespiralis.